The chain runs to 95 residues: Aspartyl/glutamyl-tRNA(Asn/Gln) amidotransferase subunit C (95 aa).

The protein belongs to the GatC family. In terms of assembly, heterotrimer of A, B and C subunits.

It catalyses the reaction L-glutamyl-tRNA(Gln) + L-glutamine + ATP + H2O = L-glutaminyl-tRNA(Gln) + L-glutamate + ADP + phosphate + H(+). It carries out the reaction L-aspartyl-tRNA(Asn) + L-glutamine + ATP + H2O = L-asparaginyl-tRNA(Asn) + L-glutamate + ADP + phosphate + 2 H(+). Allows the formation of correctly charged Asn-tRNA(Asn) or Gln-tRNA(Gln) through the transamidation of misacylated Asp-tRNA(Asn) or Glu-tRNA(Gln) in organisms which lack either or both of asparaginyl-tRNA or glutaminyl-tRNA synthetases. The reaction takes place in the presence of glutamine and ATP through an activated phospho-Asp-tRNA(Asn) or phospho-Glu-tRNA(Gln). This is Aspartyl/glutamyl-tRNA(Asn/Gln) amidotransferase subunit C from Nitratidesulfovibrio vulgaris (strain DSM 19637 / Miyazaki F) (Desulfovibrio vulgaris).